Consider the following 169-residue polypeptide: NAD(P)H-quinone oxidoreductase subunit J, chloroplastic (169 aa).

The protein belongs to the complex I 30 kDa subunit family. As to quaternary structure, NDH is composed of at least 16 different subunits, 5 of which are encoded in the nucleus.

The protein resides in the plastid. Its subcellular location is the chloroplast thylakoid membrane. The catalysed reaction is a plastoquinone + NADH + (n+1) H(+)(in) = a plastoquinol + NAD(+) + n H(+)(out). It carries out the reaction a plastoquinone + NADPH + (n+1) H(+)(in) = a plastoquinol + NADP(+) + n H(+)(out). Functionally, NDH shuttles electrons from NAD(P)H:plastoquinone, via FMN and iron-sulfur (Fe-S) centers, to quinones in the photosynthetic chain and possibly in a chloroplast respiratory chain. The immediate electron acceptor for the enzyme in this species is believed to be plastoquinone. Couples the redox reaction to proton translocation, and thus conserves the redox energy in a proton gradient. The sequence is that of NAD(P)H-quinone oxidoreductase subunit J, chloroplastic from Marchantia polymorpha (Common liverwort).